We begin with the raw amino-acid sequence, 374 residues long: Layilin (374 aa).

Residues 1 to 24 (MQPGPALQAVLLAVLLSEPRSSKG) form the signal peptide. At 25-221 (RLLSGQLVCR…TKETFKESRE (197 aa)) the chain is on the extracellular side. Residues 37-177 (TRRPCYKVIY…CNMKNNFICK (141 aa)) enclose the C-type lectin domain. 2 disulfide bridges follow: Cys63–Cys176 and Cys142–Cys168. An N-linked (GlcNAc...) asparagine glycan is attached at Asn109. A disordered region spans residues 184–212 (STTPSIRPGGEATEPPTPVLPEETQKEDT). The chain crosses the membrane as a helical span at residues 222-242 (AALNLAYILIPSIPLFLLLVV). Residues 243–374 (TSAACWVWIC…SGWVENEIYY (132 aa)) are Cytoplasmic-facing. Phosphoserine is present on residues Ser279 and Ser292. Residues 323–367 (DYDNMAVNPSESGFVTLASMESGFVTNDIYEFSPDRMGRSKESGW) form an interaction with NF2 region. Residues 330 to 374 (NPSESGFVTLASMESGFVTNDIYEFSPDRMGRSKESGWVENEIYY) form an interaction with TLN1 region. 5 repeat units span residues 333–337 (ESGFV), 343–347 (ESGFV), 349–352 (NDIY), 364–368 (ESGWV), and 370–373 (NEIY). Residues 333-368 (ESGFVTLASMESGFVTNDIYEFSPDRMGRSKESGWV) are 3 X 5 AA repeats of E-S-G-X-V. A 2 X 4 AA repeats of N-X-I-Y region spans residues 349 to 373 (NDIYEFSPDRMGRSKESGWVENEIY).

In terms of assembly, interacts with NF2 and RDX. Interacts with TLN1. Widely expressed. Abundant in the ovary.

The protein resides in the membrane. Receptor for hyaluronate. This Cricetulus griseus (Chinese hamster) protein is Layilin (LAYN).